The primary structure comprises 352 residues: GTPase Obg (352 aa).

The 159-residue stretch at 1-159 (MHFLDQAKIF…MYVWLRLKLL (159 aa)) folds into the Obg domain. Residues 122–142 (DGGRGNASYKTSTNRAPRQHG) are disordered. The OBG-type G domain maps to 160 to 328 (ADAGLVGLPN…LLDAVLEYLP (169 aa)). GTP contacts are provided by residues 166–173 (GLPNAGKS), 191–195 (FTTLR), 212–215 (DIPG), 280–283 (NKID), and 309–311 (SGA). The Mg(2+) site is built by S173 and T193.

It belongs to the TRAFAC class OBG-HflX-like GTPase superfamily. OBG GTPase family. In terms of assembly, monomer. The cofactor is Mg(2+).

It localises to the cytoplasm. An essential GTPase which binds GTP, GDP and possibly (p)ppGpp with moderate affinity, with high nucleotide exchange rates and a fairly low GTP hydrolysis rate. Plays a role in control of the cell cycle, stress response, ribosome biogenesis and in those bacteria that undergo differentiation, in morphogenesis control. In Novosphingobium aromaticivorans (strain ATCC 700278 / DSM 12444 / CCUG 56034 / CIP 105152 / NBRC 16084 / F199), this protein is GTPase Obg.